We begin with the raw amino-acid sequence, 105 residues long: MSLTQILLILFVGILVTTPHDIFIIIKELKKIKAYLINIKSSIVKNIDEPLETEQVNFYLKKIINLEGYYHGSYDLTTIKEKYYTLIINNDLIENESVPDITEKH.

Residues 4–26 form a helical membrane-spanning segment; it reads TQILLILFVGILVTTPHDIFIII.

The protein resides in the membrane. This is an uncharacterized protein from Rickettsia conorii (strain ATCC VR-613 / Malish 7).